Here is a 759-residue protein sequence, read N- to C-terminus: 1,4-alpha-glucan branching enzyme GlgB (759 aa).

Residues 1–22 (MAKTKGLPKDTAVTPSPHLRPH) are disordered. The Nucleophile role is filled by Asp422. The active-site Proton donor is Glu475.

The protein belongs to the glycosyl hydrolase 13 family. GlgB subfamily. As to quaternary structure, monomer.

It carries out the reaction Transfers a segment of a (1-&gt;4)-alpha-D-glucan chain to a primary hydroxy group in a similar glucan chain.. The protein operates within glycan biosynthesis; glycogen biosynthesis. Catalyzes the formation of the alpha-1,6-glucosidic linkages in glycogen by scission of a 1,4-alpha-linked oligosaccharide from growing alpha-1,4-glucan chains and the subsequent attachment of the oligosaccharide to the alpha-1,6 position. In Mycobacterium sp. (strain KMS), this protein is 1,4-alpha-glucan branching enzyme GlgB.